Here is a 212-residue protein sequence, read N- to C-terminus: Thymidylate kinase (212 aa).

An ATP-binding site is contributed by 10 to 17 (GPEGAGKT).

It belongs to the thymidylate kinase family.

It carries out the reaction dTMP + ATP = dTDP + ADP. In terms of biological role, phosphorylation of dTMP to form dTDP in both de novo and salvage pathways of dTTP synthesis. The sequence is that of Thymidylate kinase from Bacillus pumilus (strain SAFR-032).